The chain runs to 183 residues: Protein FAM180B (183 aa).

The N-terminal stretch at 1–23 (MAATLQFLVCLVVAICLLSGVTT) is a signal peptide.

This sequence belongs to the FAM180 family.

The protein resides in the secreted. The protein is Protein FAM180B (FAM180B) of Homo sapiens (Human).